The primary structure comprises 272 residues: Phosphate import ATP-binding protein PstB (272 aa).

One can recognise an ABC transporter domain in the interval 18 to 257; that stretch reads VSIQNATISY…FNDTDKIFNA (240 aa). Residue 50–57 participates in ATP binding; the sequence is GPSGCGKS.

Belongs to the ABC transporter superfamily. Phosphate importer (TC 3.A.1.7) family. As to quaternary structure, the complex is composed of two ATP-binding proteins (PstB), two transmembrane proteins (PstC and PstA) and a solute-binding protein (PstS).

Its subcellular location is the cell inner membrane. It catalyses the reaction phosphate(out) + ATP + H2O = ADP + 2 phosphate(in) + H(+). Its function is as follows. Part of the ABC transporter complex PstSACB involved in phosphate import. Responsible for energy coupling to the transport system. This Synechococcus sp. (strain CC9311) protein is Phosphate import ATP-binding protein PstB.